Reading from the N-terminus, the 331-residue chain is Glucokinase (331 aa).

Gly-14–Thr-19 contacts ATP.

This sequence belongs to the bacterial glucokinase family.

Its subcellular location is the cytoplasm. The catalysed reaction is D-glucose + ATP = D-glucose 6-phosphate + ADP + H(+). The protein is Glucokinase of Aromatoleum aromaticum (strain DSM 19018 / LMG 30748 / EbN1) (Azoarcus sp. (strain EbN1)).